Here is a 607-residue protein sequence, read N- to C-terminus: Glutamine--fructose-6-phosphate aminotransferase [isomerizing] (607 aa).

The active-site Nucleophile; for GATase activity is the Cys2. Residues 2–217 (CGIIGIIGND…DGDWAVLTRN (216 aa)) enclose the Glutamine amidotransferase type-2 domain. SIS domains lie at 283–422 (IGID…ARGA) and 455–597 (VCHD…VDQP). Lys602 acts as the For Fru-6P isomerization activity in catalysis.

As to quaternary structure, homodimer.

It localises to the cytoplasm. The catalysed reaction is D-fructose 6-phosphate + L-glutamine = D-glucosamine 6-phosphate + L-glutamate. Its function is as follows. Catalyzes the first step in hexosamine metabolism, converting fructose-6P into glucosamine-6P using glutamine as a nitrogen source. This chain is Glutamine--fructose-6-phosphate aminotransferase [isomerizing], found in Brucella suis biovar 1 (strain 1330).